The following is a 130-amino-acid chain: MVKLKVLSPNGTLFDEKIEMVIVKGAEGYAGFMRNTQPSIFAINNSVGYITYPDKTKKSVVIENATLYCNKDLIKIFALDFVIADNLSYDEIMKRKKDLESKIKDTTDTKELIRLQHALDIELLKLKEAK.

Belongs to the ATPase epsilon chain family. As to quaternary structure, F-type ATPases have 2 components, CF(1) - the catalytic core - and CF(0) - the membrane proton channel. CF(1) has five subunits: alpha(3), beta(3), gamma(1), delta(1), epsilon(1). CF(0) has three main subunits: a, b and c.

The protein resides in the cell membrane. Functionally, produces ATP from ADP in the presence of a proton gradient across the membrane. In Mycoplasmoides gallisepticum (strain R(low / passage 15 / clone 2)) (Mycoplasma gallisepticum), this protein is ATP synthase epsilon chain (atpC).